The primary structure comprises 517 residues: ATP synthase subunit alpha (517 aa).

ATP is bound at residue 174-181; that stretch reads GDRQTGKT.

Belongs to the ATPase alpha/beta chains family. F-type ATPases have 2 components, CF(1) - the catalytic core - and CF(0) - the membrane proton channel. CF(1) has five subunits: alpha(3), beta(3), gamma(1), delta(1), epsilon(1). CF(0) has four main subunits: a(1), b(1), b'(1) and c(9-12).

The protein resides in the cell inner membrane. It carries out the reaction ATP + H2O + 4 H(+)(in) = ADP + phosphate + 5 H(+)(out). Functionally, produces ATP from ADP in the presence of a proton gradient across the membrane. The alpha chain is a regulatory subunit. This Methylibium petroleiphilum (strain ATCC BAA-1232 / LMG 22953 / PM1) protein is ATP synthase subunit alpha.